Here is a 126-residue protein sequence, read N- to C-terminus: Gas vesicle protein J (126 aa).

It belongs to the gas vesicle GvpA family. Interacts with GvpA.

It is found in the gas vesicle. Functionally, a minor component of the gas vesicle, might be involved in nucleating gas vesicle formation. Gas vesicles (GV) are hollow, gas filled proteinaceous nanostructures. During planktonic growth they allow positioning of the organism at a favorable depth for light or nutrient acquisition. This is Gas vesicle protein J from Pseudanabaena galeata (strain PCC 6901).